A 456-amino-acid chain; its full sequence is Argininosuccinate lyase (456 aa).

The protein belongs to the lyase 1 family. Argininosuccinate lyase subfamily.

It is found in the cytoplasm. The enzyme catalyses 2-(N(omega)-L-arginino)succinate = fumarate + L-arginine. The protein operates within amino-acid biosynthesis; L-arginine biosynthesis; L-arginine from L-ornithine and carbamoyl phosphate: step 3/3. This is Argininosuccinate lyase from Listeria innocua serovar 6a (strain ATCC BAA-680 / CLIP 11262).